A 358-amino-acid polypeptide reads, in one-letter code: Probable anti-sigma-M factor YhdL (358 aa).

Residues 74 to 96 (ISVLAVISTLMILPLCTLGSYLY) form a helical membrane-spanning segment.

The N-terminus of YhdL interacts with sigma-M. YhdL interacts specifically with YhdK.

It is found in the membrane. This Bacillus subtilis (strain 168) protein is Probable anti-sigma-M factor YhdL (yhdL).